The primary structure comprises 272 residues: Sulfate transporter CysZ (272 aa).

4 helical membrane-spanning segments follow: residues 29–49 (FVIMPIVLNTILLCGLFWLFI), 66–86 (WLSFLSVILLTLSILTILLLF), 148–168 (IIALFLLSFIPLVGQTIVPVL), and 219–239 (FVPVINLLIMPVAVCGATLMW).

This sequence belongs to the CysZ family.

It localises to the cell inner membrane. High affinity, high specificity proton-dependent sulfate transporter, which mediates sulfate uptake. Provides the sulfur source for the cysteine synthesis pathway. The chain is Sulfate transporter CysZ from Haemophilus influenzae (strain PittGG).